The following is a 328-amino-acid chain: MSTFDLQPGVDFQQAGKQVLQIEREGLAQLDQYINEDFSRACEAIFRCHGKVVVMGMGKSGHIGCKIAATFASTGTPAFFVHPGEASHGDLGMITPQDIVLAISNSGESNEILTLIPVLKRQKILLICMSSNPESTMGKAADIHLCINVPQEACPLGLAPTTSTTATLVMGDALAVALLKARGFTQEDFALSHPGGALGRKLLLRISDIMHTGTEIPTVSPDASLRDALLEITRKSLGLTVICDDSMRIKGIFTDGDLRRVFDMGIDLNNAKIADVMTRGGIRVPPNILAVDALNLMESRHITALLVADGDQLLGVVHMHDMLRAGVV.

The 144-residue stretch at Ala41 to Phe184 folds into the SIS domain. Substrate is bound by residues Gly75–Thr76, His82, His88, Thr114–Lys123, and Asn148–Pro150. His82 is a binding site for Zn(2+). In terms of domain architecture, CBS 1 spans Met210–Leu268. Asp275 provides a ligand contact to substrate. Residues Met277–Val328 enclose the CBS 2 domain.

It belongs to the SIS family. GutQ/KpsF subfamily. As to quaternary structure, homotetramer.

It carries out the reaction D-arabinose 5-phosphate = D-ribulose 5-phosphate. The protein operates within carbohydrate biosynthesis; 3-deoxy-D-manno-octulosonate biosynthesis; 3-deoxy-D-manno-octulosonate from D-ribulose 5-phosphate: step 1/3. Its pathway is bacterial outer membrane biogenesis; lipopolysaccharide biosynthesis. In terms of biological role, involved in the biosynthesis of 3-deoxy-D-manno-octulosonate (KDO), a unique 8-carbon sugar component of lipopolysaccharides (LPSs). Catalyzes the reversible aldol-ketol isomerization between D-ribulose 5-phosphate (Ru5P) and D-arabinose 5-phosphate (A5P). This chain is Arabinose 5-phosphate isomerase KdsD (kdsD), found in Yersinia pestis.